Reading from the N-terminus, the 217-residue chain is Leucyl/phenylalanyl-tRNA--protein transferase (217 aa).

The protein belongs to the L/F-transferase family.

It is found in the cytoplasm. It catalyses the reaction N-terminal L-lysyl-[protein] + L-leucyl-tRNA(Leu) = N-terminal L-leucyl-L-lysyl-[protein] + tRNA(Leu) + H(+). The catalysed reaction is N-terminal L-arginyl-[protein] + L-leucyl-tRNA(Leu) = N-terminal L-leucyl-L-arginyl-[protein] + tRNA(Leu) + H(+). The enzyme catalyses L-phenylalanyl-tRNA(Phe) + an N-terminal L-alpha-aminoacyl-[protein] = an N-terminal L-phenylalanyl-L-alpha-aminoacyl-[protein] + tRNA(Phe). In terms of biological role, functions in the N-end rule pathway of protein degradation where it conjugates Leu, Phe and, less efficiently, Met from aminoacyl-tRNAs to the N-termini of proteins containing an N-terminal arginine or lysine. The polypeptide is Leucyl/phenylalanyl-tRNA--protein transferase (Caulobacter vibrioides (strain ATCC 19089 / CIP 103742 / CB 15) (Caulobacter crescentus)).